The following is a 570-amino-acid chain: Ribosome-inactivating protein SNAIf (570 aa).

The N-terminal stretch at 1–28 (MRVVTKLLYLVVLAICGLGIHGALTHTR) is a signal peptide. 3 N-linked (GlcNAc...) asparagine glycosylation sites follow: Asn-40, Asn-62, and Asn-140. Glu-199 is a catalytic residue. The N-linked (GlcNAc...) asparagine glycan is linked to Asn-232. Intrachain disulfides connect Cys-284–Cys-316, Cys-332–Cys-351, and Cys-373–Cys-385. Ricin B-type lectin domains lie at 319–439 (VEVT…WTVG) and 441–566 (VEPL…WITT). The stretch at 329-369 (DGLCVDVRDGHYIDGNTVQLGPCGNECNQLWTFRTDGTIRW) is one 1-alpha repeat. The 1-beta repeat unit spans residues 370 to 405 (LGKCLTTSSSVMIYDCNTVPPEATKWVVSTDGTITN). One copy of the 1-gamma repeat lies at 408 to 440 (SGLVLTAPQAAEGTALSLENNIHAARQGWTVGD). The 2-alpha repeat unit spans residues 452–489 (KQMCLTENGENNFVWLEDCVLNRVEQEWALYGDGTIRV). Cys-455 and Cys-470 are disulfide-bonded. Residue Asn-492 is glycosylated (N-linked (GlcNAc...) asparagine). The stretch at 493–531 (RSLCVTSEDHEPSDLIVILKCEGSGNQRWVFNTNGTISN) is one 2-beta repeat. Cys-496 and Cys-513 are disulfide-bonded. Residues Asn-526 and Asn-544 are each glycosylated (N-linked (GlcNAc...) asparagine). The stretch at 534 to 567 (AKLVMDVAQSNVSLRKIILYPPTGNPNQQWITTT) is one 2-gamma repeat.

Belongs to the ribosome-inactivating protein family. Type 2 RIP subfamily. As to quaternary structure, tetramer of four pairs of disulfide bound A-B chains. The precursor is processed in two chains, A and B, that are linked by a disulfide bond. A small truncated form corresponding roughly to the second ricin B-type lectin domain of the B chain, TrSNAIf, can also be produced. In terms of processing, N-glycosylated. Expressed in fruits.

The enzyme catalyses Endohydrolysis of the N-glycosidic bond at one specific adenosine on the 28S rRNA.. Its function is as follows. Neu5Ac(alpha2-6)Gal/GalNAc specific agglutinin. Behaves as a type-2 ribosome-inactivating protein. Strongly inhibits mammalian but not plant ribosomes. The A chain is responsible for inhibiting protein synthesis through the catalytic inactivation of 60S ribosomal subunits by removing adenine from position 4,324 of 28S rRNA. The B chain binds to cell receptors and probably facilitates the entry into the cell of the A chain; B chains are also responsible for cell agglutination (lectin activity). Involved in plant defense against insects. Functionally, binds Neu5Ac(alpha2-6)Gal/GalNAc but has no clear agglutination activity. The polypeptide is Ribosome-inactivating protein SNAIf (Sambucus nigra (European elder)).